Here is a 343-residue protein sequence, read N- to C-terminus: Zinc finger protein Gfi-1b (343 aa).

The mediates repression of transcription stretch occupies residues 1 to 20 (MPRSFLVKSKKTHTYNQHRY). The tract at residues 1 to 20 (MPRSFLVKSKKTHTYNQHRY) is SNAG domain. Residues 51 to 77 (STDPTEKQHTPENVITEEARSDPGDPR) form a disordered region. Residues 67–77 (EEARSDPGDPR) are compositionally biased toward basic and acidic residues. 6 consecutive C2H2-type zinc fingers follow at residues 176-199 (YHCVKCSKVFSTSHGLEVHVRRSH), 205-227 (FVCNICGKSFGHAVSLEQHLNVH), 233-255 (FECKMCGKTFKRSSTLSTHLLIH), 261-283 (YPCQFCGKRFHQKSDMKKHTYIH), 289-311 (HKCQVCGKAFSQSSNLITHSRKH), and 317-340 (FSCDLCCKGFQRKVDLRRHRENQH).

It is found in the nucleus. Essential transcriptional regulator necessary for development and differentiation of erythroid and megakaryocytic lineages. Alters histone methylation by recruiting histone methyltransferase to target genes promoters. Plays a role in heterochromatin formation. The polypeptide is Zinc finger protein Gfi-1b (gfi1b) (Xenopus laevis (African clawed frog)).